The chain runs to 395 residues: Elongation factor Tu (395 aa).

The region spanning 10–204 is the tr-type G domain; that stretch reads KPHVNIGTIG…AVDEYIPTPQ (195 aa). The interval 19–26 is G1; sequence GHVDHGKT. GTP is bound at residue 19–26; it reads GHVDHGKT. Thr26 lines the Mg(2+) pocket. Residues 60 to 64 are G2; sequence GITIS. Positions 81–84 are G3; the sequence is DCPG. GTP-binding positions include 81-85 and 136-139; these read DCPGH and NKCD. The G4 stretch occupies residues 136–139; sequence NKCD. Residues 174 to 176 form a G5 region; it reads SAL.

The protein belongs to the TRAFAC class translation factor GTPase superfamily. Classic translation factor GTPase family. EF-Tu/EF-1A subfamily. As to quaternary structure, monomer.

It is found in the cytoplasm. The enzyme catalyses GTP + H2O = GDP + phosphate + H(+). In terms of biological role, GTP hydrolase that promotes the GTP-dependent binding of aminoacyl-tRNA to the A-site of ribosomes during protein biosynthesis. This chain is Elongation factor Tu, found in Anoxybacillus flavithermus (strain DSM 21510 / WK1).